We begin with the raw amino-acid sequence, 901 residues long: MLIPSKLSRPVRLDHTVVRERLLAKLSGANNFRLALITSPAGYGKTTLISQWASGKSDLGWYSLDEGDNQTERFASYLIAAIQQATNGHCVTSEIMVQKRQYASLSSLFAQLFIELAEWHRPLYLVIDDYHLITNPVIHESMRFFLRHQPENLTLVVLSRNLPQLGIANLRVRDQLLEVGSQQLSFNHQEAKQFFDCRLSSPIEAAESSRLCDDVAGWATALQLIALSARQNNSPTHQSARRLSGINASHLSDYLVDEVLDSVDPATRQFLLKSSLLRSMNDALIVRVTGEDNGQMRLEEIERQGLFLQRMDDSGEWFSFHPLFGSFLRQRCQWELATELPEVHRSAAESWMAQGFPSEAIHHALAAGDANMLRDILLNHAWGLFNHSELTLLEESLRALPWESLLENPRLVLLQAWLMQSQHRYSEVNMLLARAEQEMKGEMDPTLHGEFNALRAQVAINDGDPEEAERLAMIALDELPLANFYSRIVATSVHGEVLHCKGDLSRSLALMQQTEQMARRHDIWHYALWSMIQQSEILFAQGFLQAAWETQEKAFQLIHDQHLEQLPMHEFLLRIRAQLLWAWSRLDEAESSARHGVEVLSAFQPQQQLQCLALLVQCSLARGDLDNARNHLNRLENLLGNGQYHSDWVSNADKVRVIYWQMIGDKKSAANWLRQTPKPEFANNHFLQSQWRNIARVQILLGDFDPAEIVLEELNENARSLRLMSDLNRNLLLLNQLYWQAGRKNDAQRVLLEALQLANRTGFISHFVIEGEVMAQQLRQLIQLNTLPELDQHRAQRILREINQHHRHKFAHFDENFVERLLTHPEVPELIRTSPLTQREWQVLGLIYSGYSNEQIAGELAVAATTIKTHIRNLYQKLGVAHRQDAVQHAQQLLKMMGYGV.

Serine 39–threonine 46 contributes to the ATP binding site. In terms of domain architecture, HTH luxR-type spans glutamate 829–leucine 894. The segment at residues asparagine 853–arginine 872 is a DNA-binding region (H-T-H motif).

Belongs to the MalT family. As to quaternary structure, monomer in solution. Oligomerizes to an active state in the presence of the positive effectors ATP and maltotriose.

Activated by ATP and maltotriose, which are both required for DNA binding. Its function is as follows. Positively regulates the transcription of the maltose regulon whose gene products are responsible for uptake and catabolism of malto-oligosaccharides. Specifically binds to the promoter region of its target genes, recognizing a short DNA motif called the MalT box. In Enterobacter sp. (strain 638), this protein is HTH-type transcriptional regulator MalT.